The sequence spans 179 residues: Replicase large subunit (179 aa).

This sequence belongs to the ssRNA positive-strand viruses RNA-directed RNA polymerase family.

It carries out the reaction RNA(n) + a ribonucleoside 5'-triphosphate = RNA(n+1) + diphosphate. The catalysed reaction is ATP + H2O = ADP + phosphate + H(+). In terms of biological role, replicase large subunit: is an RNA-dependent RNA polymerase active in viral RNA replication. This chain is Replicase large subunit, found in Tobacco rattle virus (strain PSG).